The primary structure comprises 118 residues: Non-specific lipid-transfer protein 5 (118 aa).

The first 25 residues, 1-25 (MEGLLKLSTLVIVCMLVTAPMASEA), serve as a signal peptide directing secretion. 4 cysteine pairs are disulfide-bonded: cysteine 29-cysteine 76, cysteine 39-cysteine 53, cysteine 54-cysteine 100, and cysteine 74-cysteine 114.

The protein belongs to the plant LTP family.

Functionally, plant non-specific lipid-transfer proteins transfer phospholipids as well as galactolipids across membranes. May play a role in wax or cutin deposition in the cell walls of expanding epidermal cells and certain secretory tissues. The chain is Non-specific lipid-transfer protein 5 (LTP5) from Arabidopsis thaliana (Mouse-ear cress).